Consider the following 261-residue polypeptide: Triosephosphate isomerase (261 aa).

10–12 (NWK) provides a ligand contact to substrate. H100 serves as the catalytic Electrophile. Catalysis depends on E172, which acts as the Proton acceptor. Residues G178, S218, and 239–240 (GG) contribute to the substrate site.

Belongs to the triosephosphate isomerase family. Homodimer.

The protein resides in the cytoplasm. The catalysed reaction is D-glyceraldehyde 3-phosphate = dihydroxyacetone phosphate. It functions in the pathway carbohydrate biosynthesis; gluconeogenesis. It participates in carbohydrate degradation; glycolysis; D-glyceraldehyde 3-phosphate from glycerone phosphate: step 1/1. Involved in the gluconeogenesis. Catalyzes stereospecifically the conversion of dihydroxyacetone phosphate (DHAP) to D-glyceraldehyde-3-phosphate (G3P). This is Triosephosphate isomerase from Mycobacterium marinum (strain ATCC BAA-535 / M).